We begin with the raw amino-acid sequence, 933 residues long: Probable Rho-type GTPase-activating protein 4 (933 aa).

2 LIM zinc-binding domains span residues 22–80 (CFCI…LCVD) and 81–129 (ICNG…CLPC). Disordered stretches follow at residues 181-200 (PSSVLSGRMQNTSSPTNSLR) and 304-338 (ENGTLPQLPKNESVVNPPPLRRSSTMNYKSVSTTT). Positions 325 to 338 (RSSTMNYKSVSTTT) are enriched in polar residues. S353 is modified (phosphoserine). Disordered stretches follow at residues 415-435 (RLSSEPNGLKKRLTNSSNYEA), 605-628 (SSSFGIFNNDKKSNRTISTPSPRE), and 641-660 (GFRPKDNKDKESGGYNKRNS). Polar residues predominate over residues 619–628 (RTISTPSPRE). A Phosphoserine modification is found at S625. Over residues 643–652 (RPKDNKDKES) the composition is skewed to basic and acidic residues. Phosphoserine occurs at positions 738 and 740. Residues 753–932 (NRLTLLRVPT…FLIDHVHEVF (180 aa)) enclose the Rho-GAP domain.

Its function is as follows. GTPase-activating protein for Rho-type proteins. In Schizosaccharomyces pombe (strain 972 / ATCC 24843) (Fission yeast), this protein is Probable Rho-type GTPase-activating protein 4 (rga4).